Reading from the N-terminus, the 60-residue chain is Small ribosomal subunit protein eS31 (60 aa).

Residues Cys32, Cys35, Cys50, and Cys53 each contribute to the Zn(2+) site. The segment at 32–53 adopts a C4-type zinc-finger fold; sequence CPRCGAGVFMGEHKDRFSCGKC.

It belongs to the eukaryotic ribosomal protein eS31 family. In terms of assembly, part of the 30S ribosomal subunit. It depends on Zn(2+) as a cofactor.

The protein is Small ribosomal subunit protein eS31 of Methanocorpusculum labreanum (strain ATCC 43576 / DSM 4855 / Z).